We begin with the raw amino-acid sequence, 354 residues long: DnaJ homolog shv (354 aa).

Residues methionine 1–alanine 22 form the signal peptide. Residues aspartate 25–glycine 90 form the J domain. 2 N-linked (GlcNAc...) asparagine glycosylation sites follow: asparagine 260 and asparagine 312.

In the testes, detected at low levels in somatic hub cells, cyst stem cells and the apical tip (at protein level). Levels in the testes decrease with age (at protein level). Expressed at low levels in hub cells, cyst stem cells and germline stem cells, and at high levels in spermatocytes and cyst cells.

The protein localises to the nucleus. It is found in the cell membrane. It localises to the secreted. In terms of biological role, maintains stem cell niche architecture in the testes. Activates an extracellular integrin beta-PS pathway which regulates DE-cadherin (shg) levels in somatic hub cells, and is essential for maintaining the number of germline stem cells and the structure and localization of hub cells. This chain is DnaJ homolog shv, found in Drosophila melanogaster (Fruit fly).